Consider the following 385-residue polypeptide: Glucose-fructose oxidoreductase domain-containing protein 2 (385 aa).

The N-terminal stretch at 1-25 (MKLLPGVGVFGTGSSARVLVPLLRA) is a signal peptide.

The protein belongs to the Gfo/Idh/MocA family.

It localises to the secreted. The protein resides in the extracellular space. It is found in the extracellular matrix. Functionally, promotes matrix assembly. In Mus musculus (Mouse), this protein is Glucose-fructose oxidoreductase domain-containing protein 2 (Gfod2).